We begin with the raw amino-acid sequence, 359 residues long: Golgi-resident adenosine 3',5'-bisphosphate 3'-phosphatase (359 aa).

Met1 carries the post-translational modification N-acetylmethionine. Residues 1–12 are Cytoplasmic-facing; it reads MAPMGIRLSPLG. A helical membrane pass occupies residues 13-33; that stretch reads VAVFCLLGLGVLYHLYSGFLA. Topologically, residues 34–359 are lumenal; that stretch reads GRFSLFGLGG…LPDLEKTGHK (326 aa). The segment at 86 to 106 is disordered; the sequence is ESNVLHEKSKGKTREGAEDKM. The active-site Proton acceptor is Asp110. Mg(2+)-binding residues include Glu133, Asp174, Leu176, and Asp177. Thr179 (proton acceptor) is an active-site residue. Residues Ser242 and His245 each coordinate AMP. Asn259 carries N-linked (GlcNAc...) asparagine glycosylation. Positions 268 and 272 each coordinate AMP. Residue Asp300 participates in Mg(2+) binding.

The protein belongs to the inositol monophosphatase superfamily. Requires Mg(2+) as cofactor. Contains N-linked glycan resistant to endoglycosydase H.

Its subcellular location is the golgi apparatus. It localises to the trans-Golgi network membrane. It carries out the reaction adenosine 3',5'-bisphosphate + H2O = AMP + phosphate. The protein operates within sulfur metabolism. With respect to regulation, strongly inhibited by lithium. In terms of biological role, exhibits 3'-nucleotidase activity toward adenosine 3',5'-bisphosphate (PAP), namely hydrolyzes adenosine 3',5'-bisphosphate into adenosine 5'-monophosphate (AMP) and a phosphate. May play a role in the formation of skeletal elements derived through endochondral ossification, possibly by clearing adenosine 3',5'-bisphosphate produced by Golgi sulfotransferases during glycosaminoglycan sulfation. Has no activity toward 3'-phosphoadenosine 5'-phosphosulfate (PAPS) or inositol phosphate (IP) substrates including I(1)P, I(1,4)P2, I(1,3,4)P3, I(1,4,5)P3 and I(1,3,4,5)P4. The protein is Golgi-resident adenosine 3',5'-bisphosphate 3'-phosphatase of Homo sapiens (Human).